Here is a 345-residue protein sequence, read N- to C-terminus: uncharacterized protein (345 aa).

This sequence belongs to the cycloisomerase 2 family.

This is an uncharacterized protein from Staphylococcus saprophyticus subsp. saprophyticus (strain ATCC 15305 / DSM 20229 / NCIMB 8711 / NCTC 7292 / S-41).